A 345-amino-acid polypeptide reads, in one-letter code: Solute carrier family 25 member 43 (345 aa).

Solcar repeat units lie at residues 11 to 100 (TSSQ…IDEL), 104 to 195 (SQWR…QERH), and 199 to 297 (TSLQ…LYRN). 6 helical membrane passes run 16-36 (LMCV…LEVV), 67-87 (FWKG…IHLA), 109-129 (IVAG…LEVV), 165-185 (GFSL…AVYI), 204-224 (FING…FETV), and 261-281 (VMAL…YFGL).

Belongs to the mitochondrial carrier (TC 2.A.29) family.

The protein resides in the mitochondrion inner membrane. This Danio rerio (Zebrafish) protein is Solute carrier family 25 member 43 (slc25a43).